Reading from the N-terminus, the 185-residue chain is Putative RNA (cytidine(34)-2'-O)-methyltransferase (185 aa).

The S-adenosyl-L-methionine site is built by isoleucine 80, glycine 105, and isoleucine 126.

It belongs to the class IV-like SAM-binding methyltransferase superfamily. RNA methyltransferase TrmH family. TrmL subfamily.

The protein resides in the cytoplasm. The enzyme catalyses cytidine(34) in tRNA + S-adenosyl-L-methionine = 2'-O-methylcytidine(34) in tRNA + S-adenosyl-L-homocysteine + H(+). It carries out the reaction 5-carboxymethylaminomethyluridine(34) in tRNA(Leu) + S-adenosyl-L-methionine = 5-carboxymethylaminomethyl-2'-O-methyluridine(34) in tRNA(Leu) + S-adenosyl-L-homocysteine + H(+). Could methylate the ribose at the nucleotide 34 wobble position in tRNA. The protein is Putative RNA (cytidine(34)-2'-O)-methyltransferase of Lactobacillus gasseri (strain ATCC 33323 / DSM 20243 / BCRC 14619 / CIP 102991 / JCM 1131 / KCTC 3163 / NCIMB 11718 / NCTC 13722 / AM63).